We begin with the raw amino-acid sequence, 123 residues long: MPTINQLIANGREPAAKRNKVPALQGCPQKRGVCTRVYTVTPKKPNSALRKVAKVRLTNGYEVVSYIPGEGHNLQEHSVVLIRGGRVKDLPGVRYHILRGVLDTQGLAKRRQRRSLYGAKRPK.

Aspartate 89 is modified (3-methylthioaspartic acid).

This sequence belongs to the universal ribosomal protein uS12 family. Part of the 30S ribosomal subunit. Contacts proteins S8 and S17. May interact with IF1 in the 30S initiation complex.

With S4 and S5 plays an important role in translational accuracy. Its function is as follows. Interacts with and stabilizes bases of the 16S rRNA that are involved in tRNA selection in the A site and with the mRNA backbone. Located at the interface of the 30S and 50S subunits, it traverses the body of the 30S subunit contacting proteins on the other side and probably holding the rRNA structure together. The combined cluster of proteins S8, S12 and S17 appears to hold together the shoulder and platform of the 30S subunit. This Gluconobacter oxydans (strain 621H) (Gluconobacter suboxydans) protein is Small ribosomal subunit protein uS12.